Consider the following 292-residue polypeptide: GTP cyclohydrolase FolE2 (292 aa).

The protein belongs to the GTP cyclohydrolase IV family.

It carries out the reaction GTP + H2O = 7,8-dihydroneopterin 3'-triphosphate + formate + H(+). It participates in cofactor biosynthesis; 7,8-dihydroneopterin triphosphate biosynthesis; 7,8-dihydroneopterin triphosphate from GTP: step 1/1. Its function is as follows. Converts GTP to 7,8-dihydroneopterin triphosphate. This Staphylococcus haemolyticus (strain JCSC1435) protein is GTP cyclohydrolase FolE2.